The sequence spans 433 residues: Probable imidazolonepropionase (433 aa).

4-imidazolone-5-propanoate contacts are provided by Tyr-160 and His-193. Residue Tyr-160 coordinates N-formimidoyl-L-glutamate. A Fe(3+)-binding site is contributed by His-261. Position 261 (His-261) interacts with Zn(2+). Glu-264 provides a ligand contact to 4-imidazolone-5-propanoate. Asp-335 serves as a coordination point for Fe(3+). Asp-335 contacts Zn(2+). Asn-337 contributes to the N-formimidoyl-L-glutamate binding site.

Belongs to the metallo-dependent hydrolases superfamily. HutI family. Zn(2+) is required as a cofactor. It depends on Fe(3+) as a cofactor.

It catalyses the reaction 4-imidazolone-5-propanoate + H2O = N-formimidoyl-L-glutamate. It participates in amino-acid degradation; L-histidine degradation into L-glutamate; N-formimidoyl-L-glutamate from L-histidine: step 3/3. The protein is Probable imidazolonepropionase (amdhd1) of Danio rerio (Zebrafish).